The chain runs to 627 residues: Asparagine synthetase domain-containing protein 1 (627 aa).

Cys2 serves as the catalytic For GATase activity. In terms of domain architecture, Glutamine amidotransferase type-2 spans Cys2–Asn184. Residues Ala308–Lys597 enclose the Asparagine synthetase domain. The tract at residues Gln373 to Thr404 is disordered.

This Mus musculus (Mouse) protein is Asparagine synthetase domain-containing protein 1 (Asnsd1).